The primary structure comprises 325 residues: Outer spore wall protein LDS1 (325 aa).

The Cytoplasmic segment spans residues 1–91; that stretch reads MSFTGSLALA…NTNKSSYSTT (91 aa). Residues 92-112 form a helical membrane-spanning segment; the sequence is MLGILSSYLIMFALVSFVYWA. Residues 113-118 are Extracellular-facing; the sequence is TITPMY. Residues 119-139 form a helical membrane-spanning segment; sequence TAFLIVLGPIGLFIAIFHSFL. Residues 140-208 are Cytoplasmic-facing; the sequence is QANVFTLLFM…VKYMLGLSVL (69 aa). The helical transmembrane segment at 209–229 threads the bilayer; it reads FVLLVISFFPLIGPILFHILI. Residues 230–263 are Extracellular-facing; that stretch reads SPFITQIYFTKVLRLQNFDNIQRRENIYLHAGQY. Residues 264-284 form a helical membrane-spanning segment; it reads ASFGFLAGLIESVPILAGFAI. The Cytoplasmic portion of the chain corresponds to 285–325; that stretch reads STNTIGSVLFNLDHPMVPENLVETQAEIEAAPQDINQQPNQ.

Belongs to the LDS family.

It is found in the prospore membrane. The protein localises to the lipid droplet. Its subcellular location is the spore wall. Functionally, involved in spore wall assembly. The polypeptide is Outer spore wall protein LDS1 (Saccharomyces cerevisiae (strain ATCC 204508 / S288c) (Baker's yeast)).